Here is a 571-residue protein sequence, read N- to C-terminus: Putative fatty-acid--CoA ligase fadD11 (571 aa).

The span at 1–19 (MARLRGAGAAGRCRPGRFG) shows a compositional bias: low complexity. 2 disordered regions span residues 1–35 (MARL…EPDR) and 67–91 (RQRG…RCAH). Residues 78–91 (ATVRRSRSRQRCAH) are compositionally biased toward basic residues. A run of 2 helical transmembrane segments spans residues 314–334 (TLAF…MSEL) and 431–451 (ANIE…MAIG).

This sequence belongs to the ATP-dependent AMP-binding enzyme family.

It is found in the cell membrane. This chain is Putative fatty-acid--CoA ligase fadD11 (fadD11), found in Mycobacterium tuberculosis (strain CDC 1551 / Oshkosh).